The following is a 266-amino-acid chain: L-aspartate dehydrogenase (266 aa).

2 residues coordinate NAD(+): alanine 123 and asparagine 189. Residue histidine 219 is part of the active site.

This sequence belongs to the L-aspartate dehydrogenase family.

The catalysed reaction is L-aspartate + NADP(+) + H2O = oxaloacetate + NH4(+) + NADPH + H(+). It carries out the reaction L-aspartate + NAD(+) + H2O = oxaloacetate + NH4(+) + NADH + H(+). The protein operates within cofactor biosynthesis; NAD(+) biosynthesis; iminoaspartate from L-aspartate (dehydrogenase route): step 1/1. In terms of biological role, specifically catalyzes the NAD or NADP-dependent dehydrogenation of L-aspartate to iminoaspartate. This is L-aspartate dehydrogenase from Cupriavidus taiwanensis (strain DSM 17343 / BCRC 17206 / CCUG 44338 / CIP 107171 / LMG 19424 / R1) (Ralstonia taiwanensis (strain LMG 19424)).